A 289-amino-acid chain; its full sequence is 4-diphosphocytidyl-2-C-methyl-D-erythritol kinase (289 aa).

Lysine 10 is an active-site residue. Residue 94–104 coordinates ATP; that stretch reads PVAAGLAGGSS. The active site involves aspartate 136.

It belongs to the GHMP kinase family. IspE subfamily.

The enzyme catalyses 4-CDP-2-C-methyl-D-erythritol + ATP = 4-CDP-2-C-methyl-D-erythritol 2-phosphate + ADP + H(+). The protein operates within isoprenoid biosynthesis; isopentenyl diphosphate biosynthesis via DXP pathway; isopentenyl diphosphate from 1-deoxy-D-xylulose 5-phosphate: step 3/6. Functionally, catalyzes the phosphorylation of the position 2 hydroxy group of 4-diphosphocytidyl-2C-methyl-D-erythritol. The polypeptide is 4-diphosphocytidyl-2-C-methyl-D-erythritol kinase (Bacillus anthracis (strain CDC 684 / NRRL 3495)).